Here is a 406-residue protein sequence, read N- to C-terminus: Argininosuccinate synthase (406 aa).

8–16 (AYSGGLDTS) is a binding site for ATP. Tyr86 contacts L-citrulline. Residue Gly116 participates in ATP binding. Thr118, Asn122, and Asp123 together coordinate L-aspartate. Position 122 (Asn122) interacts with L-citrulline. 4 residues coordinate L-citrulline: Arg126, Ser174, Glu259, and Tyr271.

This sequence belongs to the argininosuccinate synthase family. Type 1 subfamily. In terms of assembly, homotetramer.

Its subcellular location is the cytoplasm. It catalyses the reaction L-citrulline + L-aspartate + ATP = 2-(N(omega)-L-arginino)succinate + AMP + diphosphate + H(+). Its pathway is amino-acid biosynthesis; L-arginine biosynthesis; L-arginine from L-ornithine and carbamoyl phosphate: step 2/3. The sequence is that of Argininosuccinate synthase from Lacticaseibacillus paracasei (strain ATCC 334 / BCRC 17002 / CCUG 31169 / CIP 107868 / KCTC 3260 / NRRL B-441) (Lactobacillus paracasei).